We begin with the raw amino-acid sequence, 199 residues long: MPKVGMPEIRKPQLVKATMSVIDRVGLHAASISLISKEAGVSTGIINHYFGGKHGLLEETMREILRQLSSTITGKLRALPADAHHQRINAIIDGNFVGYQAENKVAKTWLAFWSYSMHDEQLKRLQRVNERRLLSHLRRELKALLSAEQAELVAHGIASLIDGIWLRGTLNPQGIEADKARIIINDYLDKQLTFYSHKI.

Residues 8-68 enclose the HTH tetR-type domain; the sequence is EIRKPQLVKA…ETMREILRQL (61 aa). The segment at residues 31 to 50 is a DNA-binding region (H-T-H motif); that stretch reads SISLISKEAGVSTGIINHYF.

It functions in the pathway amine and polyamine biosynthesis; betaine biosynthesis via choline pathway [regulation]. Its function is as follows. Repressor involved in the biosynthesis of the osmoprotectant glycine betaine. It represses transcription of the choline transporter BetT and the genes of BetAB involved in the synthesis of glycine betaine. This is HTH-type transcriptional regulator BetI from Vibrio parahaemolyticus serotype O3:K6 (strain RIMD 2210633).